The chain runs to 646 residues: Cartilage acidic protein 1 (646 aa).

The signal sequence occupies residues 1–28; the sequence is MAPSADPGMVRMALLLLPPLWLLPLTGG. An FG-GAP 1; atypical repeat occupies 47 to 89; the sequence is DYDSNPTQLNYGVAVTDVDHDGDFEIVVAGYTGPNLVLKYNRA. Residues 106 to 148 form an FG-GAP 2; atypical repeat; it reads YALRDRQGNAIGVTACDIDGDGREEIYFLNTNNAFSGVATYTD. The stretch at 284–334 is one FG-GAP 3; atypical repeat; it reads AGVDDPHQHGRGVALADFNRDGKVDIVYGNWNGPHRLYLQMSAHGKVRFRD. One copy of the FG-GAP 4; atypical repeat lies at 396–438; sequence GDALEPEGRGTGGVVTDFDGDGMLDLILSHGESMAQPLSVFRG. Residues 560–606 form the EGF-like domain; sequence DTNECIQFPFVCPRDKPVCVNTYGSYRCRTNKRCNRGYEPNEDGTAC. 3 cysteine pairs are disulfide-bonded: Cys564–Cys578, Cys571–Cys587, and Cys593–Cys606.

The protein localises to the secreted. It is found in the extracellular space. It localises to the extracellular matrix. This is Cartilage acidic protein 1 (Crtac1) from Mus musculus (Mouse).